Reading from the N-terminus, the 793-residue chain is MNYRGIYRRRYVFVLLLLVAVVNISYGWTVLKNKDYKRRYLSPSGVEKVRKHLSRKYVASRNNTQTFKKHYFSNTWAVHIDPPDNDVADRIAKKHGFTNIGKIGNIEGHYHFKHEEIGERELEKARHKTALLNLEDEVKFAEQQKILERVKRDGIPNDPYFKDMWYLLNTGQASGPAGVDMNVVPVWKKNITGRGIVISVLDDGLDWTHPDLEANYDQTASIVLNDNDNDPMPRDSDADNCHGTRCAGEAAAIANNGICGTGVAYNAKIGGVRMLDGQATDALEASALGFRGDHIDIYINCWGPKDDGKTFGKPGPMAAKALRLGAEQGRNRLGSIFVWATGNGGLTDDDCNCDGYTTSIFTISIGCIGDHGLSAYYTEKCSSTLAVTFNGASHKEGRENKMVTTDLYHQCTEEFKGTSASAPLAAGIIALTLEANPLLTWRDVQALIVHTAQITSPVDEGWKRNGAGFHFNHKFGFGRLDANAMVNAAQSWKNLPAQRKCTAASGFDHQDIPRGDSLFINIPTVACESSSAQIAKVEHVVLTVSFVHRRRGDVSIDLISPKDTKSQMLSPRKYDDSDEGLDEWSFMTVYNWGENPKGIWRLKITDNPNQDDVMNLFNGDNTDDVESLEERVIDTQTKQNKAEWEKMRKENPYFDVPYPTGVRKDKVLGSTEINDNSFDTPHTETFKIIRNHIPEVNLQNNDNMNTLNFDPVTGRKKNSINKKIINSRKRNFLTFRNFLKKSKKVQVQQEETGTQRVQVNAGYENPRISCESGYTTCSGVLINYKLTFYGTGE.

Positions 1–29 (MNYRGIYRRRYVFVLLLLVAVVNISYGWT) are cleaved as a signal peptide. Residues 30–152 (VLKNKDYKRR…QQKILERVKR (123 aa)) constitute a propeptide that is removed on maturation. Asparagine 62 and asparagine 190 each carry an N-linked (GlcNAc...) asparagine glycan. The 323-residue stretch at 164-486 (MWYLLNTGQA…FGRLDANAMV (323 aa)) folds into the Peptidase S8 domain. Residues aspartate 202 and histidine 242 each act as charge relay system in the active site. Intrachain disulfides connect cysteine 259-cysteine 411 and cysteine 351-cysteine 381. The Charge relay system role is filled by serine 419. The P/Homo B domain occupies 495-638 (LPAQRKCTAA…EERVIDTQTK (144 aa)). An intrachain disulfide couples cysteine 501 to cysteine 527.

The protein belongs to the peptidase S8 family. Furin subfamily. Predominantly in the body column.

Functionally, probably involved in the processing of hormone and other protein precursors at sites comprised of pairs of basic amino acid residues. The protein is PC3-like endoprotease variant A of Hydra vulgaris (Hydra).